A 366-amino-acid polypeptide reads, in one-letter code: Cytochrome c peroxidase, mitochondrial (366 aa).

Residues 1 to 46 constitute a mitochondrion transit peptide; sequence MASAARSASRAFLRSTPTTSSFRPAVRAARFALPAQGFRAAGRRGY. The active-site Proton acceptor is the His-127. His-250 contacts heme b. Catalysis depends on Trp-266, which acts as the Tryptophan radical intermediate.

It belongs to the peroxidase family. Cytochrome c peroxidase subfamily. In terms of assembly, forms a one-to-one complex with cytochrome c. The cofactor is heme b.

It is found in the mitochondrion matrix. It localises to the mitochondrion intermembrane space. It carries out the reaction 2 Fe(II)-[cytochrome c] + H2O2 + 2 H(+) = 2 Fe(III)-[cytochrome c] + 2 H2O. Destroys radicals which are normally produced within the cells and which are toxic to biological systems. This is Cytochrome c peroxidase, mitochondrial (ccp1) from Aspergillus fumigatus (strain ATCC MYA-4609 / CBS 101355 / FGSC A1100 / Af293) (Neosartorya fumigata).